The primary structure comprises 165 residues: Large ribosomal subunit protein uL11 (165 aa).

The residue at position 67 (R67) is an N5-methylarginine.

This sequence belongs to the universal ribosomal protein uL11 family. As to quaternary structure, component of the large ribosomal subunit (LSU). Mature N.crassa ribosomes consist of a small (40S) and a large (60S) subunit. The 40S small subunit contains 1 molecule of ribosomal RNA (18S rRNA) and at least 32 different proteins. The large 60S subunit contains 3 rRNA molecules (26S, 5.8S and 5S rRNA) and at least 42 different proteins.

The protein resides in the cytoplasm. In terms of biological role, component of the ribosome, a large ribonucleoprotein complex responsible for the synthesis of proteins in the cell. The small ribosomal subunit (SSU) binds messenger RNAs (mRNAs) and translates the encoded message by selecting cognate aminoacyl-transfer RNA (tRNA) molecules. The large subunit (LSU) contains the ribosomal catalytic site termed the peptidyl transferase center (PTC), which catalyzes the formation of peptide bonds, thereby polymerizing the amino acids delivered by tRNAs into a polypeptide chain. The nascent polypeptides leave the ribosome through a tunnel in the LSU and interact with protein factors that function in enzymatic processing, targeting, and the membrane insertion of nascent chains at the exit of the ribosomal tunnel. The polypeptide is Large ribosomal subunit protein uL11 (rpl-12) (Neurospora crassa (strain ATCC 24698 / 74-OR23-1A / CBS 708.71 / DSM 1257 / FGSC 987)).